The primary structure comprises 417 residues: Zinc finger protein CONSTANS-LIKE 16 (417 aa).

Zn(2+) contacts are provided by C17, C20, C40, and H45. Residues 17 to 59 form a B box-type; atypical zinc finger; that stretch reads CDSCVKRRARWYCAADDAFLCQSCDSLVHSANPLARRHERVRL. The tract at residues 63 to 105 is disordered; it reads SPAVVKHSNHSSASPPHEVATWHHGFTRKARTPRGSGKKNNSS. Positions 212 to 239 form a coiled coil; sequence LSNSEMFKIEKDEIEEEVEEIKAMSMDI. A CCT domain is found at 361 to 403; sequence REARVSRYREKRRTRLFSKKIRYEVRKLNAEKRPRMKGRFVKR.

It belongs to the CONSTANS family.

Its subcellular location is the nucleus. This Arabidopsis thaliana (Mouse-ear cress) protein is Zinc finger protein CONSTANS-LIKE 16 (COL16).